The primary structure comprises 534 residues: CTP synthase (534 aa).

The segment at Met1–Leu265 is amidoligase domain. Ser12 contacts CTP. UTP is bound at residue Ser12. An ATP-binding site is contributed by Gly13–Ile18. Tyr53 contributes to the L-glutamine binding site. Asp70 provides a ligand contact to ATP. Asp70 and Glu140 together coordinate Mg(2+). Residues Asp147–Glu149, Lys186–Gln191, and Lys222 each bind CTP. UTP contacts are provided by residues Lys186 to Gln191 and Lys222. One can recognise a Glutamine amidotransferase type-1 domain in the interval Asn289 to Glu530. Gly352 serves as a coordination point for L-glutamine. Cys379 acts as the Nucleophile; for glutamine hydrolysis in catalysis. L-glutamine is bound by residues Leu380–Gln383, Glu403, and Arg460. Residues His503 and Glu505 contribute to the active site.

It belongs to the CTP synthase family. As to quaternary structure, homotetramer.

The enzyme catalyses UTP + L-glutamine + ATP + H2O = CTP + L-glutamate + ADP + phosphate + 2 H(+). It carries out the reaction L-glutamine + H2O = L-glutamate + NH4(+). The catalysed reaction is UTP + NH4(+) + ATP = CTP + ADP + phosphate + 2 H(+). It participates in pyrimidine metabolism; CTP biosynthesis via de novo pathway; CTP from UDP: step 2/2. Its activity is regulated as follows. Allosterically activated by GTP, when glutamine is the substrate; GTP has no effect on the reaction when ammonia is the substrate. The allosteric effector GTP functions by stabilizing the protein conformation that binds the tetrahedral intermediate(s) formed during glutamine hydrolysis. Inhibited by the product CTP, via allosteric rather than competitive inhibition. Functionally, catalyzes the ATP-dependent amination of UTP to CTP with either L-glutamine or ammonia as the source of nitrogen. Regulates intracellular CTP levels through interactions with the four ribonucleotide triphosphates. In Methanococcoides burtonii (strain DSM 6242 / NBRC 107633 / OCM 468 / ACE-M), this protein is CTP synthase.